The sequence spans 256 residues: Pimeloyl-[acyl-carrier protein] methyl ester esterase (256 aa).

Residues 15–242 enclose the AB hydrolase-1 domain; sequence HLVLLHGWGL…AAHAPFISHP (228 aa). Substrate-binding positions include tryptophan 22, 82–83, and 143–147; these read SL and FLALQ. Serine 82 acts as the Nucleophile in catalysis. Residues aspartate 207 and histidine 235 contribute to the active site. Histidine 235 serves as a coordination point for substrate.

This sequence belongs to the AB hydrolase superfamily. Carboxylesterase BioH family. As to quaternary structure, monomer.

Its subcellular location is the cytoplasm. It catalyses the reaction 6-carboxyhexanoyl-[ACP] methyl ester + H2O = 6-carboxyhexanoyl-[ACP] + methanol + H(+). The protein operates within cofactor biosynthesis; biotin biosynthesis. The physiological role of BioH is to remove the methyl group introduced by BioC when the pimeloyl moiety is complete. It allows to synthesize pimeloyl-ACP via the fatty acid synthetic pathway through the hydrolysis of the ester bonds of pimeloyl-ACP esters. The protein is Pimeloyl-[acyl-carrier protein] methyl ester esterase of Escherichia coli (strain 55989 / EAEC).